Consider the following 153-residue polypeptide: Nucleoside diphosphate kinase (153 aa).

ATP is bound by residues K11, F59, R87, T93, R104, and N114. H117 acts as the Pros-phosphohistidine intermediate in catalysis.

It belongs to the NDK family. In terms of assembly, homotrimer. It depends on Mg(2+) as a cofactor.

The enzyme catalyses a 2'-deoxyribonucleoside 5'-diphosphate + ATP = a 2'-deoxyribonucleoside 5'-triphosphate + ADP. The catalysed reaction is a ribonucleoside 5'-diphosphate + ATP = a ribonucleoside 5'-triphosphate + ADP. Major role in the synthesis of nucleoside triphosphates other than ATP. The ATP gamma phosphate is transferred to the NDP beta phosphate via a ping-pong mechanism, using a phosphorylated active-site intermediate. In Aspergillus fumigatus (strain ATCC MYA-4609 / CBS 101355 / FGSC A1100 / Af293) (Neosartorya fumigata), this protein is Nucleoside diphosphate kinase (ndk1).